Reading from the N-terminus, the 70-residue chain is Small ribosomal subunit protein bS21 (70 aa).

Belongs to the bacterial ribosomal protein bS21 family.

The sequence is that of Small ribosomal subunit protein bS21 from Campylobacter hominis (strain ATCC BAA-381 / DSM 21671 / CCUG 45161 / LMG 19568 / NCTC 13146 / CH001A).